Here is a 386-residue protein sequence, read N- to C-terminus: Succinate--CoA ligase [ADP-forming] subunit beta (386 aa).

Positions 9–244 constitute an ATP-grasp domain; sequence KQVLRSSNLN…DSQIDAKEAA (236 aa). Residues lysine 46, 53-55, glutamate 99, leucine 102, and glutamate 107 contribute to the ATP site; that span reads GRG. 2 residues coordinate Mg(2+): asparagine 199 and aspartate 213. Substrate contacts are provided by residues asparagine 264 and 321–323; that span reads GIV.

This sequence belongs to the succinate/malate CoA ligase beta subunit family. As to quaternary structure, heterotetramer of two alpha and two beta subunits. The cofactor is Mg(2+).

It catalyses the reaction succinate + ATP + CoA = succinyl-CoA + ADP + phosphate. It carries out the reaction GTP + succinate + CoA = succinyl-CoA + GDP + phosphate. The protein operates within carbohydrate metabolism; tricarboxylic acid cycle; succinate from succinyl-CoA (ligase route): step 1/1. Functionally, succinyl-CoA synthetase functions in the citric acid cycle (TCA), coupling the hydrolysis of succinyl-CoA to the synthesis of either ATP or GTP and thus represents the only step of substrate-level phosphorylation in the TCA. The beta subunit provides nucleotide specificity of the enzyme and binds the substrate succinate, while the binding sites for coenzyme A and phosphate are found in the alpha subunit. In Thiobacillus denitrificans (strain ATCC 25259 / T1), this protein is Succinate--CoA ligase [ADP-forming] subunit beta.